The chain runs to 693 residues: Homoaconitase, mitochondrial (693 aa).

The transit peptide at 1–17 (MFRVQRLRMFSTSRALY) directs the protein to the mitochondrion. Positions 338, 405, and 408 each coordinate [4Fe-4S] cluster.

The protein belongs to the aconitase/IPM isomerase family. Requires [4Fe-4S] cluster as cofactor.

It localises to the mitochondrion. The catalysed reaction is (2R,3S)-homoisocitrate = cis-homoaconitate + H2O. The protein operates within amino-acid biosynthesis; L-lysine biosynthesis via AAA pathway; L-alpha-aminoadipate from 2-oxoglutarate: step 3/5. In terms of biological role, catalyzes the reversible hydration of cis-homoaconitate to (2R,3S)-homoisocitrate, a step in the alpha-aminoadipate pathway for lysine biosynthesis. The sequence is that of Homoaconitase, mitochondrial (LYS4) from Kluyveromyces lactis (strain ATCC 8585 / CBS 2359 / DSM 70799 / NBRC 1267 / NRRL Y-1140 / WM37) (Yeast).